Reading from the N-terminus, the 302-residue chain is tRNA dimethylallyltransferase (302 aa).

12–19 (GPTASGKS) contributes to the ATP binding site. Substrate is bound at residue 14 to 19 (TASGKS). An interaction with substrate tRNA region spans residues 37 to 40 (DSMQ).

This sequence belongs to the IPP transferase family. As to quaternary structure, monomer. Mg(2+) is required as a cofactor.

It carries out the reaction adenosine(37) in tRNA + dimethylallyl diphosphate = N(6)-dimethylallyladenosine(37) in tRNA + diphosphate. Functionally, catalyzes the transfer of a dimethylallyl group onto the adenine at position 37 in tRNAs that read codons beginning with uridine, leading to the formation of N6-(dimethylallyl)adenosine (i(6)A). This Corynebacterium diphtheriae (strain ATCC 700971 / NCTC 13129 / Biotype gravis) protein is tRNA dimethylallyltransferase.